A 251-amino-acid chain; its full sequence is Small ribosomal subunit protein uS2 (251 aa).

It belongs to the universal ribosomal protein uS2 family.

The chain is Small ribosomal subunit protein uS2 from Novosphingobium aromaticivorans (strain ATCC 700278 / DSM 12444 / CCUG 56034 / CIP 105152 / NBRC 16084 / F199).